The sequence spans 133 residues: Helix-loop-helix protein 1 (133 aa).

Residues 1–78 (MMLNSDTMEL…RRRATAKYRT (78 aa)) are disordered. Residues 25-39 (DCGGGPGPDGAGSGD) show a composition bias toward gly residues. Positions 52–65 (ESGRKDLQHLSREE) are enriched in basic and acidic residues. The span at 66–78 (RRRRRRATAKYRT) shows a compositional bias: basic residues. One can recognise a bHLH domain in the interval 75–127 (KYRTAHATRERIRVEAFNLAFAELRKLLPTLPPDKKLSKIEILRLAICYISYL).

Efficient DNA binding requires dimerization with another bHLH protein.

Its subcellular location is the nucleus. Functionally, may serve as DNA-binding protein and may be involved in the control of cell-type determination, possibly within the developing nervous system. This Mus musculus (Mouse) protein is Helix-loop-helix protein 1 (Nhlh1).